We begin with the raw amino-acid sequence, 612 residues long: Indole-3-acetic acid-amido synthetase GH3.5 (612 aa).

It belongs to the IAA-amido conjugating enzyme family.

Its function is as follows. Catalyzes the synthesis of indole-3-acetic acid (IAA)-amino acid conjugates, providing a mechanism for the plant to cope with the presence of excess auxin. Strongly reactive with Glu, Gln, Trp, Asp, Ala, Leu, Phe, Gly, Tyr, Met, Ile and Val. Little or no product formation with His, Ser, Thr, Arg, Lys, or Cys. Also active on pyruvic and butyric acid analogs of IAA, PAA and the synthetic auxin naphthaleneacetic acid (NAA). The two chlorinated synthetic auxin herbicides 2,4-D and 3,6-dichloro-o-anisic acid (dicamba) cannot be used as substrates. The polypeptide is Indole-3-acetic acid-amido synthetase GH3.5 (GH3.5) (Arabidopsis thaliana (Mouse-ear cress)).